Here is a 64-residue protein sequence, read N- to C-terminus: Large ribosomal subunit protein bL32 (64 aa).

Residues 1–16 (MAVQKSRKTRSRRGMR) show a composition bias toward basic residues. The interval 1 to 64 (MAVQKSRKTR…TPKESYEDEE (64 aa)) is disordered.

This sequence belongs to the bacterial ribosomal protein bL32 family.

The chain is Large ribosomal subunit protein bL32 from Coxiella burnetii (strain CbuK_Q154) (Coxiella burnetii (strain Q154)).